The chain runs to 390 residues: UDP-galactose translocator (390 aa).

The segment at Met-1–Glu-24 is disordered. Helical transmembrane passes span Ala-3–Leu-23, Tyr-37–Ala-57, Phe-65–Leu-85, Leu-97–Val-117, Thr-140–Leu-160, Trp-169–Gly-189, Gly-200–Phe-220, Leu-238–Val-258, Pro-269–Val-289, and Leu-315–Val-335. The span at Ser-9–Ala-22 shows a compositional bias: low complexity. The tract at residues Pro-356–Lys-390 is disordered.

Belongs to the nucleotide-sugar transporter family. SLC35A subfamily. As to quaternary structure, interacts with SLC35A3; the interaction is reduced in the presence of SLC35A4. Found in a complex with SLC35A3 and SLC35A4.

The protein localises to the golgi apparatus membrane. It carries out the reaction UMP(out) + UDP-alpha-D-galactose(in) = UMP(in) + UDP-alpha-D-galactose(out). It catalyses the reaction UDP-N-acetyl-alpha-D-galactosamine(in) + UMP(out) = UDP-N-acetyl-alpha-D-galactosamine(out) + UMP(in). The catalysed reaction is UMP(out) + UDP-alpha-D-glucose(in) = UMP(in) + UDP-alpha-D-glucose(out). The enzyme catalyses UMP(out) + UDP-N-acetyl-alpha-D-glucosamine(in) = UMP(in) + UDP-N-acetyl-alpha-D-glucosamine(out). It carries out the reaction UDP-alpha-D-galactose(in) + AMP(out) = UDP-alpha-D-galactose(out) + AMP(in). It catalyses the reaction UDP-alpha-D-galactose(in) + CMP(out) = UDP-alpha-D-galactose(out) + CMP(in). The catalysed reaction is UDP-N-acetyl-alpha-D-galactosamine(out) + UDP-alpha-D-galactose(in) = UDP-N-acetyl-alpha-D-galactosamine(in) + UDP-alpha-D-galactose(out). The enzyme catalyses UDP-N-acetyl-alpha-D-glucosamine(out) + UDP-alpha-D-galactose(in) = UDP-N-acetyl-alpha-D-glucosamine(in) + UDP-alpha-D-galactose(out). It carries out the reaction UDP-alpha-D-galactose(in) + UDP-alpha-D-glucose(out) = UDP-alpha-D-galactose(out) + UDP-alpha-D-glucose(in). It catalyses the reaction UMP(out) + CMP(in) = UMP(in) + CMP(out). The catalysed reaction is UMP(out) + AMP(in) = UMP(in) + AMP(out). Functionally, transports uridine diphosphate galactose (UDP-galactose) from the cytosol into the Golgi apparatus. It functions as an antiporter that exchanges UDP-galactose for UMP. It is also able to exchange UDP-galactose for AMP and CMP, and to transport UDP-N-acetylgalactosamine (UDP-GalNAc) and other nucleotide sugars. As a provider of UDP-galactose to galactosyltransferases present in the Golgi apparatus, it is necessary for globotriaosylceramide/globoside (Gb3Cer) synthesis from lactosylceramide. In Mus musculus (Mouse), this protein is UDP-galactose translocator.